The chain runs to 481 residues: Argininosuccinate lyase (481 aa).

Belongs to the lyase 1 family. Argininosuccinate lyase subfamily.

The protein resides in the cytoplasm. It catalyses the reaction 2-(N(omega)-L-arginino)succinate = fumarate + L-arginine. The protein operates within amino-acid biosynthesis; L-arginine biosynthesis; L-arginine from L-ornithine and carbamoyl phosphate: step 3/3. The chain is Argininosuccinate lyase from Methanococcus maripaludis (strain DSM 14266 / JCM 13030 / NBRC 101832 / S2 / LL).